A 1009-amino-acid chain; its full sequence is DNA ligase 3 (1009 aa).

A mitochondrion-targeting transit peptide spans 1 to 42 (MSLAFKIFFPQTLRALSRKELCLFRKHHWRDVRQFSQWSETD). A PARP-type zinc finger spans residues 93-185 (FCVDYAKRGT…QITQHIADLS (93 aa)). Residues Cys-105, Cys-108, His-139, and Cys-142 each coordinate Zn(2+). A phosphoserine mark is found at Ser-210, Ser-216, Ser-227, and Ser-242. The tract at residues 224–256 (RKFSGFSAKPNNSGEAPSSPTPKRSLSSSKCDP) is disordered. Over residues 240–252 (PSSPTPKRSLSSS) the composition is skewed to low complexity. 4 interaction with DNA regions span residues 277–280 (PSYN), 318–323 (VYNLND), 388–391 (TKED), and 421–427 (KMNSGAK). Glu-506 is a binding site for ATP. Lys-508 serves as the catalytic N6-AMP-lysine intermediate. ATP is bound by residues Arg-513 and Arg-528. Residues Glu-560 and Glu-655 each contribute to the Mg(2+) site. 3 residues coordinate ATP: Lys-660, Arg-671, and Lys-675. The tract at residues 842–917 (AGDEGSSTTG…LATKSSPVKV (76 aa)) is disordered. Low complexity-rich tracts occupy residues 845-854 (EGSSTTGGSS) and 863-877 (SAVSRKAPSKPSAST). Over residues 884–898 (LSNSNSKDGNMQTAK) the composition is skewed to polar residues. Ser-913 carries the post-translational modification Phosphoserine. The BRCT domain occupies 933-1009 (VLLDIFTGVR…IRKRRLVAPC (77 aa)).

It belongs to the ATP-dependent DNA ligase family. In terms of assembly, isoform 3 interacts (via BRCT domain) with the nuclear DNA-repair protein XRCC1. Interacts with POLG. Interacts with POLB. Requires Mg(2+) as cofactor. Testis, thymus, prostate and heart.

The protein localises to the mitochondrion. The protein resides in the nucleus. It carries out the reaction ATP + (deoxyribonucleotide)n-3'-hydroxyl + 5'-phospho-(deoxyribonucleotide)m = (deoxyribonucleotide)n+m + AMP + diphosphate.. In terms of biological role, isoform 3 functions as a heterodimer with DNA-repair protein XRCC1 in the nucleus and can correct defective DNA strand-break repair and sister chromatid exchange following treatment with ionizing radiation and alkylating agents. Isoform 1 is targeted to mitochondria, where it functions as a DNA ligase in mitochondrial base-excision DNA repair. This is DNA ligase 3 (LIG3) from Homo sapiens (Human).